We begin with the raw amino-acid sequence, 505 residues long: Maturase K (505 aa).

Belongs to the intron maturase 2 family. MatK subfamily.

It localises to the plastid. It is found in the chloroplast. In terms of biological role, usually encoded in the trnK tRNA gene intron. Probably assists in splicing its own and other chloroplast group II introns. The sequence is that of Maturase K from Cubanola domingensis.